The sequence spans 419 residues: UDP-N-acetylglucosamine 1-carboxyvinyltransferase (419 aa).

22–23 (KN) serves as a coordination point for phosphoenolpyruvate. A UDP-N-acetyl-alpha-D-glucosamine-binding site is contributed by Arg-93. Cys-117 (proton donor) is an active-site residue. Cys-117 is subject to 2-(S-cysteinyl)pyruvic acid O-phosphothioketal. Residues Asp-307 and Ile-329 each coordinate UDP-N-acetyl-alpha-D-glucosamine.

Belongs to the EPSP synthase family. MurA subfamily.

The protein localises to the cytoplasm. It carries out the reaction phosphoenolpyruvate + UDP-N-acetyl-alpha-D-glucosamine = UDP-N-acetyl-3-O-(1-carboxyvinyl)-alpha-D-glucosamine + phosphate. It participates in cell wall biogenesis; peptidoglycan biosynthesis. Functionally, cell wall formation. Adds enolpyruvyl to UDP-N-acetylglucosamine. The chain is UDP-N-acetylglucosamine 1-carboxyvinyltransferase from Pseudoalteromonas atlantica (strain T6c / ATCC BAA-1087).